The primary structure comprises 438 residues: Chromosomal replication initiator protein DnaA (438 aa).

The interval 1–74 (MNEINKIWQK…SFYQITGSQV (74 aa)) is domain I, interacts with DnaA modulators. The segment at 74-100 (VEVKYIITGKEHETGLIEEKKQVIKKG) is domain II. The segment at 101-317 (NLNPKYTFDT…GSLIKLCAYT (217 aa)) is domain III, AAA+ region. 4 residues coordinate ATP: G145, G147, K148, and T149. A domain IV, binds dsDNA region spans residues 318 to 438 (SLTKVPISMD…DSIIKKVTGQ (121 aa)).

This sequence belongs to the DnaA family. As to quaternary structure, oligomerizes as a right-handed, spiral filament on DNA at oriC.

Its subcellular location is the cytoplasm. Its function is as follows. Plays an essential role in the initiation and regulation of chromosomal replication. ATP-DnaA binds to the origin of replication (oriC) to initiate formation of the DNA replication initiation complex once per cell cycle. Binds the DnaA box (a 9 base pair repeat at the origin) and separates the double-stranded (ds)DNA. Forms a right-handed helical filament on oriC DNA; dsDNA binds to the exterior of the filament while single-stranded (ss)DNA is stabiized in the filament's interior. The ATP-DnaA-oriC complex binds and stabilizes one strand of the AT-rich DNA unwinding element (DUE), permitting loading of DNA polymerase. After initiation quickly degrades to an ADP-DnaA complex that is not apt for DNA replication. Binds acidic phospholipids. The sequence is that of Chromosomal replication initiator protein DnaA from Thermodesulfovibrio yellowstonii (strain ATCC 51303 / DSM 11347 / YP87).